Reading from the N-terminus, the 403-residue chain is Phosphoglycerate kinase (403 aa).

Substrate-binding positions include 21–23, arginine 36, 59–62, arginine 119, and arginine 159; these read DFN and HLGR. Residues lysine 214, glycine 301, glutamate 332, and 359–362 each bind ATP; that span reads GGDS.

The protein belongs to the phosphoglycerate kinase family. Monomer.

It localises to the cytoplasm. The enzyme catalyses (2R)-3-phosphoglycerate + ATP = (2R)-3-phospho-glyceroyl phosphate + ADP. It functions in the pathway carbohydrate degradation; glycolysis; pyruvate from D-glyceraldehyde 3-phosphate: step 2/5. This chain is Phosphoglycerate kinase, found in Lactobacillus johnsonii (strain CNCM I-12250 / La1 / NCC 533).